Consider the following 427-residue polypeptide: MRKPLIICDFDGTITTNDNIISIMKQFAPEEWTALKDGVLSKDISIRDGVGRMFNLLPASLKEDITAYVLKQAETRPGFKEFVSFLDEKGLPFYVVSGGMDFFVYPLLEGIVGKDRIYCNEAAFTSRNIEIRWPYPCDGGCGNDCGCCKPSIIRRLKGRDDFVVMIGDSVTDVEAAKCSDLCIARDYLLRECEELGLKHAAFGDFRDVRRILEETAEVKEWMSEQKRQELAEVKKELAERDWFPATSGNLSIKVSEDPLRFLITASGKDKRKETEEDFLLADEEGRPAETGHALKPSAETLLHTYVYQHTNAGCCLHVHTVDNNVISELYAKEKQVTFRGQEIIKALGLWEEHAEVTVPIIENSAHIPDLAADFAGHLSGDSGAVLIRSHGITVWGKTAFEAKRMLEAYEFLFSWHLKLKALQAYHV.

The segment at Met1–Trp221 is HK-MTPenyl-1-P phosphatase. Residues Met222–Val427 form an MTRu-1-P dehydratase region. 2 residues coordinate Zn(2+): His317 and His319.

In the N-terminal section; belongs to the HAD-like hydrolase superfamily. MtnX family. This sequence in the C-terminal section; belongs to the aldolase class II family. MtnB subfamily. Homotetramer. Zn(2+) is required as a cofactor.

It catalyses the reaction 5-(methylsulfanyl)-D-ribulose 1-phosphate = 5-methylsulfanyl-2,3-dioxopentyl phosphate + H2O. It carries out the reaction 2-hydroxy-5-methylsulfanyl-3-oxopent-1-enyl phosphate + H2O = 1,2-dihydroxy-5-(methylsulfanyl)pent-1-en-3-one + phosphate. The protein operates within amino-acid biosynthesis; L-methionine biosynthesis via salvage pathway; L-methionine from S-methyl-5-thio-alpha-D-ribose 1-phosphate: step 2/6. Its pathway is amino-acid biosynthesis; L-methionine biosynthesis via salvage pathway; L-methionine from S-methyl-5-thio-alpha-D-ribose 1-phosphate: step 4/6. Its function is as follows. Catalyzes the dehydration of methylthioribulose-1-phosphate (MTRu-1-P) into 2,3-diketo-5-methylthiopentyl-1-phosphate (DK-MTP-1-P). In terms of biological role, dephosphorylates 2-hydroxy-3-keto-5-methylthiopentenyl-1-phosphate (HK-MTPenyl-1-P) yielding 1,2-dihydroxy-3-keto-5-methylthiopentene (DHK-MTPene). The protein is Bifunctional enzyme MtnB/MtnX (mtnB/mtnX) of Bacillus licheniformis (strain ATCC 14580 / DSM 13 / JCM 2505 / CCUG 7422 / NBRC 12200 / NCIMB 9375 / NCTC 10341 / NRRL NRS-1264 / Gibson 46).